A 30-amino-acid polypeptide reads, in one-letter code: Thylakoid lumenal 13.3 kDa protein (30 aa).

The protein localises to the plastid. The protein resides in the chloroplast thylakoid lumen. The chain is Thylakoid lumenal 13.3 kDa protein from Spinacia oleracea (Spinach).